Consider the following 555-residue polypeptide: Beta-caryophyllene synthase (555 aa).

Positions 313, 317, 456, and 464 each coordinate Mg(2+). Positions 313-317 match the DDXXD motif motif; sequence DDIYD.

This sequence belongs to the terpene synthase family. The cofactor is Mg(2+).

It catalyses the reaction (2E,6E)-farnesyl diphosphate = (+)-(E)-beta-caryophyllene + diphosphate. It functions in the pathway secondary metabolite biosynthesis; terpenoid biosynthesis. Its function is as follows. Sesquiterpene synthase converting farnesyl diphosphate to beta-caryophyllene as the major product. The chain is Beta-caryophyllene synthase from Phyla dulcis (Aztec sweet herb).